The sequence spans 278 residues: Undecaprenyl-diphosphatase 1 (278 aa).

The next 6 membrane-spanning stretches (helical) occupy residues 45-65 (AVIG…LVYF), 95-115 (WWVI…KPLI), 119-139 (LASL…MWWA), 191-211 (VAAT…AGLY), 225-245 (PLAV…AWLL), and 256-276 (FVVY…TGVL).

This sequence belongs to the UppP family.

It localises to the cell membrane. It catalyses the reaction di-trans,octa-cis-undecaprenyl diphosphate + H2O = di-trans,octa-cis-undecaprenyl phosphate + phosphate + H(+). In terms of biological role, catalyzes the dephosphorylation of undecaprenyl diphosphate (UPP). Confers resistance to bacitracin. The chain is Undecaprenyl-diphosphatase 1 from Streptomyces coelicolor (strain ATCC BAA-471 / A3(2) / M145).